A 198-amino-acid chain; its full sequence is Nucleoid occlusion factor SlmA (198 aa).

Residues 10 to 70 (NRREEILQSL…SLIEFIEDSL (61 aa)) form the HTH tetR-type domain. Residues 33-52 (TTAKLAASVGVSEAALYRHF) constitute a DNA-binding region (H-T-H motif). The stretch at 117-145 (EQDKLQGRINQLFERIEAQLRQVLREKKM) forms a coiled coil.

This sequence belongs to the nucleoid occlusion factor SlmA family. In terms of assembly, homodimer. Interacts with FtsZ.

It localises to the cytoplasm. Its subcellular location is the nucleoid. Functionally, required for nucleoid occlusion (NO) phenomenon, which prevents Z-ring formation and cell division over the nucleoid. Acts as a DNA-associated cell division inhibitor that binds simultaneously chromosomal DNA and FtsZ, and disrupts the assembly of FtsZ polymers. SlmA-DNA-binding sequences (SBS) are dispersed on non-Ter regions of the chromosome, preventing FtsZ polymerization at these regions. The protein is Nucleoid occlusion factor SlmA of Enterobacter sp. (strain 638).